We begin with the raw amino-acid sequence, 133 residues long: Helix-loop-helix protein 1 (133 aa).

A disordered region spans residues 1–79 (MMLNSDTMEL…RRATAKYRTA (79 aa)). A compositionally biased stretch (gly residues) spans 25 to 45 (DCGGGAGPDGAGPGGPGGGQA). Residues 52 to 65 (EPGRKDLQHLSREE) show a composition bias toward basic and acidic residues. Residues 66–79 (RRRRRRATAKYRTA) are compositionally biased toward basic residues. The bHLH domain occupies 75–127 (KYRTAHATRERIRVEAFNLAFAELRKLLPTLPPDKKLSKIEILRLAICYISYL).

In terms of assembly, efficient DNA binding requires dimerization with another bHLH protein.

Its subcellular location is the nucleus. May serve as DNA-binding protein and may be involved in the control of cell-type determination, possibly within the developing nervous system. The sequence is that of Helix-loop-helix protein 1 (NHLH1) from Homo sapiens (Human).